The sequence spans 308 residues: Glucan 1,3-beta-glucosidase BGL2 (308 aa).

A signal peptide spans 1-18 (MQIKFLTTLATVLTSVAA). Glu119 functions as the Proton donor in the catalytic mechanism. Residue Asn197 is glycosylated (N-linked (GlcNAc...) asparagine). Glu228 acts as the Nucleophile in catalysis.

Belongs to the glycosyl hydrolase 17 family.

Its subcellular location is the secreted. The protein resides in the cell wall. It is found in the cytoplasm. It catalyses the reaction Successive hydrolysis of beta-D-glucose units from the non-reducing ends of (1-&gt;3)-beta-D-glucans, releasing alpha-glucose.. Its function is as follows. Cell wall glucan 1,3-beta-glucosidase involved in cell wall biosynthesis and virulence. Crucial for delivery of beta-1,3-glucan to the biofilm matrix and for accumulation of mature matrix biomass. Plays a role as a major antigen in human systemic candidiasis patients. In Candida albicans (strain SC5314 / ATCC MYA-2876) (Yeast), this protein is Glucan 1,3-beta-glucosidase BGL2 (BGL2).